We begin with the raw amino-acid sequence, 163 residues long: Putative pre-16S rRNA nuclease (163 aa).

Belongs to the YqgF nuclease family.

The protein resides in the cytoplasm. Could be a nuclease involved in processing of the 5'-end of pre-16S rRNA. The polypeptide is Putative pre-16S rRNA nuclease (Rhodopseudomonas palustris (strain BisB18)).